We begin with the raw amino-acid sequence, 237 residues long: Dihydroceramide fatty acyl 2-hydroxylase FAH1 (237 aa).

A run of 2 helical transmembrane segments spans residues 50-70 and 80-100; these read LTLT…VWCI and LPEI…FEYV. Zn(2+) is bound by residues histidine 102, histidine 107, histidine 123, histidine 126, and histidine 127. A run of 2 helical transmembrane segments spans residues 137–157 and 164–184; these read VFPP…AKAI and PALF…HYYL. Histidine 181, histidine 185, histidine 201, histidine 204, and histidine 205 together coordinate Zn(2+).

The protein belongs to the sterol desaturase family. Interacts with CYTB5-A, CYTB5-B, CYTB5-C and CYTB5-D. Interacts indirectly with BI-1 via CYTB5-D. It depends on Zn(2+) as a cofactor. As to expression, expressed in leaves, roots, flowers and seeds.

It is found in the endoplasmic reticulum membrane. The catalysed reaction is an N-(1,2-saturated acyl)sphinganine + 2 Fe(II)-[cytochrome b5] + O2 + 2 H(+) = an N-[(2'R)-hydroxyacyl]sphinganine + 2 Fe(III)-[cytochrome b5] + H2O. Functionally, fatty acid 2-hydroxylase involved in the alpha-hydroxylation of sphingolipid-associated very long-chain fatty acids (VLCFA). Probably involved in the resistance response to oxidative stress. In Arabidopsis thaliana (Mouse-ear cress), this protein is Dihydroceramide fatty acyl 2-hydroxylase FAH1.